Consider the following 569-residue polypeptide: Phospholipase B-like protein D (569 aa).

Positions 1–22 (MIIFKNLLKLLIILLTIKLYFC) are cleaved as a signal peptide. N-linked (GlcNAc...) asparagine glycans are attached at residues Asn93, Asn126, Asn181, Asn425, and Asn430.

It belongs to the phospholipase B-like family.

Its subcellular location is the secreted. Probable phospholipase. This is Phospholipase B-like protein D (plbD) from Dictyostelium discoideum (Social amoeba).